A 198-amino-acid polypeptide reads, in one-letter code: Guanine nucleotide-binding protein subunit alpha-11 (198 aa).

The tract at residues 1–11 (LLGTGESGKST) is G1 motif. The region spanning 1 to 198 (LLGTGESGKS…LSEYDHVLVE (198 aa)) is the G-alpha domain. Residues 3 to 10 (GTGESGKS) and 137 to 140 (LRVR) contribute to the GTP site. Serine 10 lines the Mg(2+) pocket. Residues 135–143 (DVLRVRVPT) are G2 motif. Threonine 143 provides a ligand contact to Mg(2+). Residues 158 to 167 (FRMVDVGGQR) are G3 motif.

This sequence belongs to the G-alpha family. G(q) subfamily. In terms of assembly, g proteins are composed of 3 units; alpha, beta and gamma. The alpha chain contains the guanine nucleotide binding site. Interacts with RGS22. Interacts with NTSR1.

It is found in the cell membrane. Its subcellular location is the cytoplasm. The enzyme catalyses GTP + H2O = GDP + phosphate + H(+). Its function is as follows. Guanine nucleotide-binding proteins (G proteins) function as transducers downstream of G protein-coupled receptors (GPCRs) in numerous signaling cascades. The alpha chain contains the guanine nucleotide binding site and alternates between an active, GTP-bound state and an inactive, GDP-bound state. Signaling by an activated GPCR promotes GDP release and GTP binding. The alpha subunit has a low GTPase activity that converts bound GTP to GDP, thereby terminating the signal. Both GDP release and GTP hydrolysis are modulated by numerous regulatory proteins. Signaling is mediated via phospholipase C-beta-dependent inositol lipid hydrolysis for signal propagation: activates phospholipase C-beta: following GPCR activation, GNA11 activates PLC-beta (PLCB1, PLCB2, PLCB3 or PLCB4), leading to production of diacylglycerol (DAG) and inositol 1,4,5-trisphosphate (IP3). Transduces FFAR4 signaling in response to long-chain fatty acids (LCFAs). Together with GNAQ, required for heart development. In the respiratory epithelium, transmits OXGR1-dependent signals that lead to downstream intracellular Ca(2+) release and mucocilliary clearance of airborne pathogens. In Canis lupus familiaris (Dog), this protein is Guanine nucleotide-binding protein subunit alpha-11 (GNA11).